A 216-amino-acid chain; its full sequence is Probable transaldolase (216 aa).

Lysine 83 serves as the catalytic Schiff-base intermediate with substrate.

Belongs to the transaldolase family. Type 3B subfamily.

It localises to the cytoplasm. It catalyses the reaction D-sedoheptulose 7-phosphate + D-glyceraldehyde 3-phosphate = D-erythrose 4-phosphate + beta-D-fructose 6-phosphate. It functions in the pathway carbohydrate degradation; pentose phosphate pathway; D-glyceraldehyde 3-phosphate and beta-D-fructose 6-phosphate from D-ribose 5-phosphate and D-xylulose 5-phosphate (non-oxidative stage): step 2/3. Transaldolase is important for the balance of metabolites in the pentose-phosphate pathway. In Caldanaerobacter subterraneus subsp. tengcongensis (strain DSM 15242 / JCM 11007 / NBRC 100824 / MB4) (Thermoanaerobacter tengcongensis), this protein is Probable transaldolase.